Here is a 54-residue protein sequence, read N- to C-terminus: DGVKLCDVPSGTWSGHCGSSSKCSQQCKDREHFAYGGACHYQFPSVKCFCKRQC.

4 disulfides stabilise this stretch: cysteine 6-cysteine 54, cysteine 17-cysteine 39, cysteine 23-cysteine 48, and cysteine 27-cysteine 50.

Belongs to the DEFL family.

It is found in the secreted. Possesses antifungal activity insensitive to inorganic cations. Causes germ tubes and hyphae to swell and form multiple hyphal buds. Binds to the plasma membrane of the fungus. Has no inhibitory effect on insect gut alpha-amylase. This is Defensin-like protein 1 from Heuchera sanguinea (Coralbells).